We begin with the raw amino-acid sequence, 122 residues long: MVKKVNKSEVRIKKHNRIRNRFSGTPTRPRLAVFRSNNHMYAQIIDDTVGNTLVSASTLEKGVKAELEKTNDVAAAAMLGTVIAKKALEKGITTVVFDRGGFIYQGKVQALAEAAREAGLNF.

It belongs to the universal ribosomal protein uL18 family. In terms of assembly, part of the 50S ribosomal subunit; part of the 5S rRNA/L5/L18/L25 subcomplex. Contacts the 5S and 23S rRNAs.

Its function is as follows. This is one of the proteins that bind and probably mediate the attachment of the 5S RNA into the large ribosomal subunit, where it forms part of the central protuberance. This Lachnoclostridium phytofermentans (strain ATCC 700394 / DSM 18823 / ISDg) (Clostridium phytofermentans) protein is Large ribosomal subunit protein uL18.